The primary structure comprises 371 residues: MPSNPTRKGRVVVGMSGGVDSSVTAWLLKQQGYEVVGLFMKNWEDDDDSEYCSTRQDLLDAASVADLVGVEFEYVNFAAEYKDRVFAEFLREYSAGRTPNPDVLCNAEIKFKAFLDHAMALGAEHIATGHYARVRTVETPAGPRHQLLKALDDTKDQSYFLHRLNQAQLARTLFPLGELRKTEVRRIAHEIGLHNAAKKDSTGICFIGERPFREFLNRYLPSEPGPILTPEGQRVGTHHGLSFYTLGQRKGLGVGGVKGRQRDDGTAEAWYAARKDLARNVLYVVQGHDHPWLLSAQLQAQDASWIAGEPPAAGAYGAKTRYRQVDAACRLDQAGGERFALAFEQAQWAVTPGQSAVLYDGEVCLGGGIII.

ATP-binding positions include 14-21 and Met-40; that span reads GMSGGVDS. An interaction with target base in tRNA region spans residues 100–102; the sequence is NPD. Cys-105 functions as the Nucleophile in the catalytic mechanism. Cys-105 and Cys-205 are joined by a disulfide. Gly-129 lines the ATP pocket. The tract at residues 155–157 is interaction with tRNA; it reads KDQ. Cys-205 (cysteine persulfide intermediate) is an active-site residue. Residues 321 to 322 form an interaction with tRNA region; it reads RY.

It belongs to the MnmA/TRMU family.

Its subcellular location is the cytoplasm. It catalyses the reaction S-sulfanyl-L-cysteinyl-[protein] + uridine(34) in tRNA + AH2 + ATP = 2-thiouridine(34) in tRNA + L-cysteinyl-[protein] + A + AMP + diphosphate + H(+). Its function is as follows. Catalyzes the 2-thiolation of uridine at the wobble position (U34) of tRNA, leading to the formation of s(2)U34. The protein is tRNA-specific 2-thiouridylase MnmA of Bordetella parapertussis (strain 12822 / ATCC BAA-587 / NCTC 13253).